Here is a 314-residue protein sequence, read N- to C-terminus: Oxalate oxidoreductase subunit beta (314 aa).

Residues Cys-24, Cys-27, Cys-52, and Cys-225 each coordinate [4Fe-4S] cluster.

In terms of assembly, dimer of heterotrimer of one alpha, one beta and one delta subunit. The cofactor is [4Fe-4S] cluster.

The enzyme catalyses oxidized 2[4Fe-4S]-[ferredoxin] + oxalate = reduced 2[4Fe-4S]-[ferredoxin] + 2 CO2. Functionally, catalyzes the anaerobic oxidation of oxalate using a broad range of electron acceptors, including ferredoxin and the nickel-dependent carbon monoxide dehydrogenase. Does not require coenzyme A as cosubstrate. Enables anaerobic growth on oxalate which is used as energy source by the bacteria. This Moorella thermoacetica (strain ATCC 39073 / JCM 9320) protein is Oxalate oxidoreductase subunit beta.